A 342-amino-acid polypeptide reads, in one-letter code: Succinylglutamate desuccinylase (342 aa).

Zn(2+) is bound by residues histidine 63, glutamate 66, and histidine 155. Glutamate 219 is a catalytic residue.

It belongs to the AspA/AstE family. Succinylglutamate desuccinylase subfamily. Requires Zn(2+) as cofactor.

The catalysed reaction is N-succinyl-L-glutamate + H2O = L-glutamate + succinate. Its pathway is amino-acid degradation; L-arginine degradation via AST pathway; L-glutamate and succinate from L-arginine: step 5/5. Functionally, transforms N(2)-succinylglutamate into succinate and glutamate. This chain is Succinylglutamate desuccinylase, found in Vibrio vulnificus (strain YJ016).